Consider the following 228-residue polypeptide: Ribonuclease S-4 (228 aa).

An N-terminal signal peptide occupies residues 1–27; the sequence is MGITGMTYMFTMVLSLIVLIFSASTVG. Residue glutamine 36 participates in RNA binding. An intrachain disulfide couples cysteine 42 to cysteine 49. An RNA-binding site is contributed by histidine 60. The active-site Proton donor is histidine 60. Cysteine 75 and cysteine 119 are disulfide-bonded. Asparagine 87 is a glycosylation site (N-linked (GlcNAc) asparagine). 98 to 99 lines the RNA pocket; the sequence is NV. A glycan (N-linked (GlcNAc...) asparagine) is linked at asparagine 101. RNA contacts are provided by residues phenylalanine 108, 111–112, and 115–116; these read RE and KH. Glutamate 112 is a catalytic residue. Histidine 116 (proton acceptor) is an active-site residue. 3 N-linked (GlcNAc...) asparagine glycosylation sites follow: asparagine 144, asparagine 160, and asparagine 175. Disulfide bonds link cysteine 183/cysteine 222 and cysteine 199/cysteine 210.

The protein belongs to the RNase T2 family. The N-glycans attached at Asn-101, Asn-160 and Asn-175 consist predominantly of disaccharide (GlcNAc-GlcNAc). The N-glycan at 87 is 53% monosaccharide and 47% disaccharide. The N-glycan at Asn-144 contains mannose and xylose.

The protein localises to the secreted. The protein resides in the extracellular space. It catalyses the reaction a ribonucleotidyl-ribonucleotide-RNA + H2O = a 3'-end 3'-phospho-ribonucleotide-RNA + a 5'-end dephospho-ribonucleoside-RNA + H(+). Self-incompatibility (SI) is the inherited ability of a flowering plant to prevent self-fertilization by discriminating between self and non-self pollen during pollination. In many species, self-incompatibility is controlled by the single, multiallelic locus S. The sequence is that of Ribonuclease S-4 from Pyrus pyrifolia (Chinese pear).